The following is a 567-amino-acid chain: Nucleolus and neural progenitor protein (567 aa).

A Phosphoserine modification is found at serine 265. The disordered stretch occupies residues 437–457 (SKHHLRQRRSQNKFLRRQRKP). Residues 442 to 460 (RQRRSQNKFLRRQRKPQRK) form a nuclear localization signal region.

The protein belongs to the nepro family.

It is found in the nucleus. The protein resides in the nucleolus. Functionally, may play a role in cortex development as part of the Notch signaling pathway. Downstream of Notch may repress the expression of proneural genes and inhibit neuronal differentiation thereby maintaining neural progenitors. May also play a role in preimplentation embryo development. The protein is Nucleolus and neural progenitor protein of Homo sapiens (Human).